A 321-amino-acid polypeptide reads, in one-letter code: Glucokinase (321 aa).

8 to 13 lines the ATP pocket; it reads GDVGGT.

This sequence belongs to the bacterial glucokinase family.

The protein resides in the cytoplasm. It carries out the reaction D-glucose + ATP = D-glucose 6-phosphate + ADP + H(+). This chain is Glucokinase, found in Klebsiella pneumoniae (strain 342).